The chain runs to 198 residues: Carnitine operon protein CaiE (198 aa).

Residues 174 to 198 (KPLTQAEENRPRLKGTTDVKPKSAQ) are disordered. Basic and acidic residues predominate over residues 180–198 (EENRPRLKGTTDVKPKSAQ).

The protein belongs to the transferase hexapeptide repeat family.

It participates in amine and polyamine metabolism; carnitine metabolism. Functionally, overproduction of CaiE stimulates the activity of CaiB and CaiD. The chain is Carnitine operon protein CaiE from Salmonella typhimurium (strain LT2 / SGSC1412 / ATCC 700720).